The following is a 421-amino-acid chain: ATP-dependent RNA helicase RhlB (421 aa).

The Q motif motif lies at 9–37 (QKFSDFALHPKVVEALEKKGFHNCTPIQA). Residues 40–219 (LPLTLAGRDV…FEQMNNAEYI (180 aa)) form the Helicase ATP-binding domain. Position 53–60 (53–60 (AQTGTGKT)) interacts with ATP. Positions 165 to 168 (DEAD) match the DEAD box motif. Positions 245–390 (RLLQTLIEEE…VSKYNPDALM (146 aa)) constitute a Helicase C-terminal domain. The tract at residues 395 to 421 (KPLRLTRARTGNGPRRTGAPRNRRRSG) is disordered. The span at 402 to 414 (ARTGNGPRRTGAP) shows a compositional bias: low complexity.

It belongs to the DEAD box helicase family. RhlB subfamily. In terms of assembly, component of the RNA degradosome, which is a multiprotein complex involved in RNA processing and mRNA degradation.

Its subcellular location is the cytoplasm. It catalyses the reaction ATP + H2O = ADP + phosphate + H(+). Functionally, DEAD-box RNA helicase involved in RNA degradation. Has RNA-dependent ATPase activity and unwinds double-stranded RNA. This Shigella flexneri serotype 5b (strain 8401) protein is ATP-dependent RNA helicase RhlB.